The primary structure comprises 376 residues: Chaperone protein DnaJ (376 aa).

In terms of domain architecture, J spans D5–G69. The CR-type zinc-finger motif lies at G135–T217. The Zn(2+) site is built by C148, C151, C165, C168, C191, C194, C205, and C208. CXXCXGXG motif repeat units follow at residues C148 to R155, C165 to G172, C191 to G198, and C205 to G212.

Belongs to the DnaJ family. As to quaternary structure, homodimer. It depends on Zn(2+) as a cofactor.

It is found in the cytoplasm. Its function is as follows. Participates actively in the response to hyperosmotic and heat shock by preventing the aggregation of stress-denatured proteins and by disaggregating proteins, also in an autonomous, DnaK-independent fashion. Unfolded proteins bind initially to DnaJ; upon interaction with the DnaJ-bound protein, DnaK hydrolyzes its bound ATP, resulting in the formation of a stable complex. GrpE releases ADP from DnaK; ATP binding to DnaK triggers the release of the substrate protein, thus completing the reaction cycle. Several rounds of ATP-dependent interactions between DnaJ, DnaK and GrpE are required for fully efficient folding. Also involved, together with DnaK and GrpE, in the DNA replication of plasmids through activation of initiation proteins. This Methanothermobacter thermautotrophicus (strain ATCC 29096 / DSM 1053 / JCM 10044 / NBRC 100330 / Delta H) (Methanobacterium thermoautotrophicum) protein is Chaperone protein DnaJ.